We begin with the raw amino-acid sequence, 56 residues long: Large ribosomal subunit protein bL32 (56 aa).

The tract at residues 1-38 is disordered; it reads MAVQQNKKSRSRRDMRRSHDALTTAAVSVDKTSGETHL. The segment covering 7 to 16 has biased composition (basic residues); the sequence is KKSRSRRDMR.

Belongs to the bacterial ribosomal protein bL32 family.

This chain is Large ribosomal subunit protein bL32, found in Histophilus somni (strain 129Pt) (Haemophilus somnus).